The chain runs to 395 residues: Small RNA 2'-O-methyltransferase (395 aa).

Residues D79 and S115 each coordinate S-adenosyl-L-methionine. Residues E133, E136, H137, and H182 each coordinate Mg(2+).

The protein belongs to the methyltransferase superfamily. HEN1 family. Mg(2+) serves as cofactor. In terms of tissue distribution, specifically expressed in testis.

It localises to the cytoplasm. It catalyses the reaction small RNA 3'-end nucleotide + S-adenosyl-L-methionine = small RNA 3'-end 2'-O-methylnucleotide + S-adenosyl-L-homocysteine + H(+). Functionally, methyltransferase that adds a 2'-O-methyl group at the 3'-end of piRNAs, a class of 24 to 30 nucleotide RNAs that are generated by a Dicer-independent mechanism and are primarily derived from transposons and other repeated sequence elements. This probably protects the 3'-end of piRNAs from uridylation activity and subsequent degradation. Stabilization of piRNAs is essential for gametogenesis. The chain is Small RNA 2'-O-methyltransferase (Henmt1) from Mus musculus (Mouse).